The primary structure comprises 481 residues: (S)-N-methylcoclaurine 3'-hydroxylase isozyme 1 (481 aa).

Cys423 provides a ligand contact to heme.

The protein belongs to the cytochrome P450 family. The cofactor is heme. In terms of tissue distribution, restricted to the parietal region of sieve elements adjacent or proximal to laticifers in roots, stems, leaves, carpels and hypocotyls.

The protein localises to the endoplasmic reticulum. It carries out the reaction (S)-N-methylcoclaurine + reduced [NADPH--hemoprotein reductase] + O2 = (S)-3'-hydroxy-N-methylcoclaurine + oxidized [NADPH--hemoprotein reductase] + H2O + H(+). The protein operates within alkaloid biosynthesis; (S)-reticuline biosynthesis; (S)-reticuline from (S)-norcoclaurine: step 3/4. In terms of biological role, cytochrome P450 monooxygenase involved in the biosynthesis of benzylisoquinoline alkaloids. Catalyzes the 3'-hydroxylation of (S)-N-methylcoclaurine. This is (S)-N-methylcoclaurine 3'-hydroxylase isozyme 1 from Papaver somniferum (Opium poppy).